Reading from the N-terminus, the 178-residue chain is Nucleoplasmin-3 (178 aa).

Alanine 2 is modified (N-acetylalanine). Phosphoserine is present on residues serine 13 and serine 16. An Omega-N-methylarginine modification is found at arginine 27. The segment at threonine 141–proline 178 is disordered. Over residues valine 146 to glutamate 164 the composition is skewed to acidic residues. 3 positions are modified to phosphoserine: serine 147, serine 151, and serine 158.

The protein belongs to the nucleoplasmin family. In terms of assembly, interacts with NPM (via N-terminus). Forms a pentamer with NPM at a ratio 4:1 (NPM3/NPM). Two pentamers form a decamer. Post-translationally, phosphorylated. Ubiquitous.

The protein resides in the nucleus. The protein localises to the nucleolus. In terms of biological role, plays a role in the regulation of diverse cellular processes such as ribosome biogenesis, chromatin remodeling or protein chaperoning. Modulates the histone chaperone function and the RNA-binding activity of nucleolar phosphoprotein B23/NPM. Efficiently mediates chromatin remodeling when included in a pentamer containing NPM3 and NPM. This is Nucleoplasmin-3 (NPM3) from Homo sapiens (Human).